We begin with the raw amino-acid sequence, 73 residues long: Putative defensin-like protein 277 (73 aa).

The first 24 residues, 1 to 24 (MSAQKIYLASLLLFICLVFPQSTA), serve as a signal peptide directing secretion. Cystine bridges form between cysteine 27/cysteine 64, cysteine 33/cysteine 52, cysteine 39/cysteine 62, and cysteine 43/cysteine 63.

Belongs to the DEFL family.

Its subcellular location is the secreted. In Arabidopsis thaliana (Mouse-ear cress), this protein is Putative defensin-like protein 277.